The chain runs to 388 residues: S-adenosylmethionine synthase (388 aa).

Residue H16 participates in ATP binding. D18 is a binding site for Mg(2+). Residue E44 participates in K(+) binding. The L-methionine site is built by E57 and Q100. A flexible loop region spans residues 100 to 110 (QSPDIAQGVDK). ATP-binding positions include 167 to 169 (DAK), 233 to 234 (RF), D242, 248 to 249 (RK), A265, and K269. D242 lines the L-methionine pocket. K273 lines the L-methionine pocket.

The protein belongs to the AdoMet synthase family. In terms of assembly, homotetramer; dimer of dimers. Mg(2+) serves as cofactor. K(+) is required as a cofactor.

The protein resides in the cytoplasm. It catalyses the reaction L-methionine + ATP + H2O = S-adenosyl-L-methionine + phosphate + diphosphate. The protein operates within amino-acid biosynthesis; S-adenosyl-L-methionine biosynthesis; S-adenosyl-L-methionine from L-methionine: step 1/1. Catalyzes the formation of S-adenosylmethionine (AdoMet) from methionine and ATP. The overall synthetic reaction is composed of two sequential steps, AdoMet formation and the subsequent tripolyphosphate hydrolysis which occurs prior to release of AdoMet from the enzyme. The sequence is that of S-adenosylmethionine synthase from Polynucleobacter asymbioticus (strain DSM 18221 / CIP 109841 / QLW-P1DMWA-1) (Polynucleobacter necessarius subsp. asymbioticus).